The chain runs to 775 residues: Rab3 GTPase-activating protein catalytic subunit (775 aa).

Residues serine 173, serine 330, serine 373, serine 375, and serine 384 each carry the phosphoserine modification. The segment at aspartate 324–glycine 351 is disordered. Residues alanine 386–leucine 414 are disordered. The residue at position 458 (serine 458) is a Phosphoserine.

This sequence belongs to the Rab3-GAP catalytic subunit family. The Rab3 GTPase-activating complex is a heterodimer composed of Rab3gap1 and Rab3gap2. The Rab3 GTPase-activating complex interacts with DMXL2. Interacts with LMAN1.

The protein resides in the cytoplasm. It is found in the endoplasmic reticulum. The protein localises to the golgi apparatus. It localises to the cis-Golgi network. Catalytic subunit of the Rab3 GTPase-activating (Rab3GAP) complex composed of RAB3GAP1 and RAB3GAP2, which has GTPase-activating protein (GAP) activity towards various Rab3 subfamily members (RAB3A, RAB3B, RAB3C and RAB3D), RAB5A and RAB43, and guanine nucleotide exchange factor (GEF) activity towards RAB18. As part of the Rab3GAP complex, acts as a GAP for Rab3 proteins by converting active RAB3-GTP to the inactive form RAB3-GDP. Rab3 proteins are involved in regulated exocytosis of neurotransmitters and hormones. The Rab3GAP complex, acts as a GEF for RAB18 by promoting the conversion of inactive RAB18-GDP to the active form RAB18-GTP. Recruits and stabilizes RAB18 at the cis-Golgi membrane where RAB18 is most likely activated. Also involved in RAB18 recruitment at the endoplasmic reticulum (ER) membrane where it maintains proper ER structure. Required for normal eye and brain development. May participate in neurodevelopmental processes such as proliferation, migration and differentiation before synapse formation, and non-synaptic vesicular release of neurotransmitters. The chain is Rab3 GTPase-activating protein catalytic subunit from Rattus norvegicus (Rat).